Here is a 356-residue protein sequence, read N- to C-terminus: DNA polymerase IV (356 aa).

In terms of domain architecture, UmuC spans 6 to 187 (IIHIDMDYFF…LDIGDFPGVG (182 aa)). Mg(2+)-binding residues include D10 and D105. E106 is an active-site residue.

It belongs to the DNA polymerase type-Y family. As to quaternary structure, monomer. The cofactor is Mg(2+).

The protein localises to the cytoplasm. It catalyses the reaction DNA(n) + a 2'-deoxyribonucleoside 5'-triphosphate = DNA(n+1) + diphosphate. Poorly processive, error-prone DNA polymerase involved in untargeted mutagenesis. Copies undamaged DNA at stalled replication forks, which arise in vivo from mismatched or misaligned primer ends. These misaligned primers can be extended by PolIV. Exhibits no 3'-5' exonuclease (proofreading) activity. May be involved in translesional synthesis, in conjunction with the beta clamp from PolIII. The chain is DNA polymerase IV from Staphylococcus aureus (strain COL).